The chain runs to 328 residues: 5,10-methylenetetrahydromethanopterin reductase (328 aa).

Belongs to the mer family.

The protein localises to the cytoplasm. It carries out the reaction 5-methyl-5,6,7,8-tetrahydromethanopterin + oxidized coenzyme F420-(gamma-L-Glu)(n) + H(+) = 5,10-methylenetetrahydromethanopterin + reduced coenzyme F420-(gamma-L-Glu)(n). It participates in one-carbon metabolism; methanogenesis from CO(2); methyl-coenzyme M from 5,10-methylene-5,6,7,8-tetrahydromethanopterin: step 1/2. Its function is as follows. Catalyzes the reversible reduction of methylene-H(4)MPT to methyl-H(4)MPT. In Methanosarcina acetivorans (strain ATCC 35395 / DSM 2834 / JCM 12185 / C2A), this protein is 5,10-methylenetetrahydromethanopterin reductase.